A 78-amino-acid chain; its full sequence is Acyl carrier protein (78 aa).

The Carrier domain maps to M1 to K76. S36 carries the O-(pantetheine 4'-phosphoryl)serine modification.

This sequence belongs to the acyl carrier protein (ACP) family. 4'-phosphopantetheine is transferred from CoA to a specific serine of apo-ACP by AcpS. This modification is essential for activity because fatty acids are bound in thioester linkage to the sulfhydryl of the prosthetic group.

Its subcellular location is the cytoplasm. It functions in the pathway lipid metabolism; fatty acid biosynthesis. In terms of biological role, carrier of the growing fatty acid chain in fatty acid biosynthesis. This Helicobacter pylori (strain G27) protein is Acyl carrier protein.